The primary structure comprises 282 residues: MTQLITTIEEMRSIIANLHNQRRSVGFIPTMGALHDGHLKMMSLSLNENDVTIISIFVNPLQFGPNEDLDSYPRDIVGDTAKAESVGVDYIFHPTVKEMYPELPTIELKAGRLASVLEGAERPGHFDGVVTVVNKLFNIVRPHKAYFGKKDAQQLAIVEKMVEDFNHPIEIKGVDIVREDDGLAKSSRNIYLTKNERIEAVHLYKSLCLAQSLYKNGERNSEKIIKATRDYLTEHTSGTIETVAIYSYPELVEQTQIKDSIFISLAVKFSKARLIDNIIIEG.

Position 31–38 (31–38) interacts with ATP; sequence MGALHDGH. H38 functions as the Proton donor in the catalytic mechanism. Q62 contributes to the (R)-pantoate binding site. Q62 is a binding site for beta-alanine. ATP is bound at residue 148 to 151; that stretch reads GKKD. Q154 is a (R)-pantoate binding site. Residues V177 and 185-188 each bind ATP; that span reads KSSR.

This sequence belongs to the pantothenate synthetase family. In terms of assembly, homodimer.

It localises to the cytoplasm. The enzyme catalyses (R)-pantoate + beta-alanine + ATP = (R)-pantothenate + AMP + diphosphate + H(+). Its pathway is cofactor biosynthesis; (R)-pantothenate biosynthesis; (R)-pantothenate from (R)-pantoate and beta-alanine: step 1/1. In terms of biological role, catalyzes the condensation of pantoate with beta-alanine in an ATP-dependent reaction via a pantoyl-adenylate intermediate. The chain is Pantothenate synthetase from Staphylococcus saprophyticus subsp. saprophyticus (strain ATCC 15305 / DSM 20229 / NCIMB 8711 / NCTC 7292 / S-41).